An 888-amino-acid polypeptide reads, in one-letter code: E3 ubiquitin-protein ligase SH3RF1 (888 aa).

The RING-type zinc-finger motif lies at 12 to 53; the sequence is CPVCLERLDASAKVLPCQHTFCKRCLLGIVGSRNELRCPECR. SH3 domains lie at 134 to 193 and 196 to 259; these read PQLP…IIKP and QPPP…FNSA. The interval 275–321 is disordered; it reads DAGECSSAAAQSSTAPKHSDTKKNTKKRHSFTSLTMANKSSQASQNR. The tract at residues 292–362 is interaction with RAC1; sequence HSDTKKNTKK…APSQVHISTT (71 aa). Residue Ser304 is modified to Phosphoserine. Polar residues predominate over residues 305–321; sequence FTSLTMANKSSQASQNR. The segment at 440–543 is interaction with AKT2; the sequence is HLRPQTRPSV…STAGGPAQKL (104 aa). Positions 445–506 constitute an SH3 3 domain; the sequence is TRPSVYVAIY…PGNYVAPVTR (62 aa). Disordered stretches follow at residues 516–549, 617–637, and 693–741; these read VPMS…NGVA, SPAS…APLM, and PDSA…ASPT. Positions 520 to 535 are enriched in polar residues; it reads TAGQTSRGVTMVSPST. Position 532 is a phosphoserine (Ser532). The span at 693 to 704 shows a compositional bias: polar residues; that stretch reads PDSASLACGNSS. Positions 707–718 are enriched in basic and acidic residues; that stretch reads KPDKDSKKEKKG. Residue Ser735 is modified to Phosphoserine. The region spanning 829–888 is the SH3 4 domain; sequence VVCERHRVVVSYPPQSEAELELKEGDIVFVHKKREDGWFKGTLQRNGKTGLFPGSFVENI.

Belongs to the SH3RF family. Interacts with HERP1. Interacts with RAC1; in a GTP-dependent manner. Interacts with MAP3K10/MLK2 and MAP3K11/MLK3. Interacts with MAPK8IP; this interaction leads to the PJAC complex (POSH-JIP or SH3RF1/MAPK8IP apoptotic complex) with a 1:1 ratio. Interacts with SIAH1. Probably part of a signaling complex that may contain SH3RF1, MAPK8IP, DLK1, MAP2K4/MKK4, MAP2K7/MKK7, MAPK8/JNK1, MAPK9/JNK2, AKT1 and AKT2. Found in a complex with RAC2, MAP3K7/TAK1, MAP2K7/MKK7, MAPK8IP1/JIP1, MAPK8/JNK1 and MAPK9/JNK2. Found in a complex with RAC1, MAP3K11/MLK3, MAP2K7/MKK7, MAPK8IP1/JIP1 and MAPK8/JNK1. Interacts with SH3RF2. In terms of processing, phosphorylated at Ser-304 by AKT1 and AKT2. When phosphorylated, it has reduced ability to bind Rac. Post-translationally, autoubiquitinated. Ubiquitinated by SH3RF2, leading to proteasome-mediated degradation.

Its subcellular location is the cytoplasm. It is found in the perinuclear region. The protein localises to the cell projection. The protein resides in the lamellipodium. It localises to the golgi apparatus. Its subcellular location is the trans-Golgi network. It catalyses the reaction S-ubiquitinyl-[E2 ubiquitin-conjugating enzyme]-L-cysteine + [acceptor protein]-L-lysine = [E2 ubiquitin-conjugating enzyme]-L-cysteine + N(6)-ubiquitinyl-[acceptor protein]-L-lysine.. It functions in the pathway protein modification; protein ubiquitination. Has E3 ubiquitin-protein ligase activity. In the absence of an external substrate, it can catalyze self-ubiquitination. Stimulates ubiquitination of potassium channel KCNJ1, enhancing it's dynamin-dependent and clathrin-independent endocytosis. Acts as a scaffold protein that coordinates with MAPK8IP1/JIP1 in organizing different components of the JNK pathway, including RAC1 or RAC2, MAP3K11/MLK3 or MAP3K7/TAK1, MAP2K7/MKK7, MAPK8/JNK1 and/or MAPK9/JNK2 into a functional multiprotein complex to ensure the effective activation of the JNK signaling pathway. Regulates the differentiation of CD4(+) and CD8(+) T-cells and promotes T-helper 1 (Th1) cell differentiation. Regulates the activation of MAPK8/JNK1 and MAPK9/JNK2 in CD4(+) T-cells and the activation of MAPK8/JNK1 in CD8(+) T-cells. Controls proper cortical neuronal migration and the formation of proximal cytoplasmic dilation in the leading process (PCDLP) in migratory neocortical neurons by regulating the proper localization of activated RAC1 and F-actin assembly. This chain is E3 ubiquitin-protein ligase SH3RF1 (SH3RF1), found in Pongo abelii (Sumatran orangutan).